A 259-amino-acid chain; its full sequence is UPF0246 protein RD1_0358 (259 aa).

The protein belongs to the UPF0246 family.

The chain is UPF0246 protein RD1_0358 from Roseobacter denitrificans (strain ATCC 33942 / OCh 114) (Erythrobacter sp. (strain OCh 114)).